The following is a 631-amino-acid chain: Tumor protein p73 (631 aa).

The segment at 1-43 (MAQTSSSSSSTFEHLWSSLEPDSTYFDLPQPSQGTSEASGSEE) is transactivation. Disordered regions lie at residues 23–43 (STYF…GSEE) and 69–113 (SRAA…NTDY). Thr24 is subject to Phosphothreonine; by PLK1. Tyr25 bears the Phosphotyrosine; by SRC and HCK mark. 2 stretches are compositionally biased toward polar residues: residues 30 to 43 (QPSQ…GSEE) and 86 to 100 (PTHS…TFDT). Tyr91 bears the Phosphotyrosine; by ABL1 mark. The DNA-binding stretch occupies residues 123–302 (FQQSSTAKSA…DRKADEDHYR (180 aa)). Zn(2+) contacts are provided by Cys186, His189, Cys250, and Cys254. Polar residues predominate over residues 306 to 315 (ALNESTTKNG). A disordered region spans residues 306–334 (ALNESTTKNGAASKRAFKQSPPAIPALGT). The interaction with HIPK2 stretch occupies residues 337 to 372 (KKRRHGDEDMFYMHVRGRENFEILMKVKESLELMEL). The segment at 337–378 (KKRRHGDEDMFYMHVRGRENFEILMKVKESLELMELVPQPLV) is oligomerization. The short motif at 477–481 (PPPPY) is the PPxY motif element. An SAM domain is found at 479-545 (PPYHADPSLV…WRGLQDLKQS (67 aa)). Residue Lys622 forms a Glycyl lysine isopeptide (Lys-Gly) (interchain with G-Cter in SUMO); alternate linkage. Lys622 is covalently cross-linked (Glycyl lysine isopeptide (Lys-Gly) (interchain with G-Cter in SUMO2); alternate).

The protein belongs to the p53 family. As to quaternary structure, found in a complex with p53/TP53 and CABLES1. The C-terminal oligomerization domain binds to the ABL1 tyrosine kinase SH3 domain. Interacts with HECW2, HIPK2, RANBP9 and WWOX. Interacts (via SAM domain) with FBXO45 (via B30.2/SPRY domain). Interacts with YAP1 (phosphorylated form). Interacts with HCK (via SH3 domain); this inhibits TP73 activity and degradation. Interacts (via SAM domain) with NQO1; this interaction is NADH-dependent, stabilizes TP73 in response to oxidative stress and protects it from ubiquitin-independent degradation by the 20S proteasome. Requires Zn(2+) as cofactor. Sumoylated on Lys-622, which potentiates proteasomal degradation but does not affect transcriptional activity. In terms of processing, phosphorylation by PLK1 and PLK3 inhibits the transcription regulator activity and pro-apoptotic function. Higher levels of phosphorylation seen in striatal neurons of. mutant huntingtin (htt) transgenic mice. Post-translationally, polyubiquitinated by RCHY1/PIRH2; leading to its degradation by the proteasome. In terms of tissue distribution, found in striatal neurons of mutant huntingtin (htt) transgenic mice (at protein level). Isoform 1 is expressed in the nasal epithelium, the vomeronasal organ, the hippocampus and the hypothalamus.

It is found in the nucleus. The protein localises to the cytoplasm. Participates in the apoptotic response to DNA damage. Isoforms containing the transactivation domain are pro-apoptotic, isoforms lacking the domain are anti-apoptotic and block the function of p53 and transactivating p73 isoforms. May be a tumor suppressor protein. Is an activator of FOXJ1 expression, essential for the positive regulation of lung ciliated cell differentiation. The sequence is that of Tumor protein p73 (Tp73) from Mus musculus (Mouse).